The chain runs to 396 residues: Activity-regulated cytoskeleton-associated protein (396 aa).

Residues 54–78 (SKQVERELKGLHRSVGKLENNLDGY) adopt a coiled-coil conformation. The interval 89–100 (KSIKACLCRCQE) is interaction with SH3GL1 or SH3GL3. An interaction with DNM2 region spans residues 195-214 (QSWVPGEDGQPSPGVDTQIF). Serine 260 carries the post-translational modification Phosphoserine. Residues lysine 268 and lysine 269 each participate in a glycyl lysine isopeptide (Lys-Gly) (interchain with G-Cter in ubiquitin) cross-link. At threonine 278 the chain carries Phosphothreonine. Residues 358–396 (GLEQAAEPSVTPLPTEDETEALTPALTSESVASDRTQPE) form a disordered region. Over residues 382-396 (ALTSESVASDRTQPE) the composition is skewed to polar residues.

This sequence belongs to the ARC/ARG3.1 family. Homooligomer; homooligomerizes into virion-like capsids. Interacts with SH3GL1/endophilin-2, SH3GL3/endophilin-3 and DNM2/DYN2. Interacts with CAMK2B (in the kinase inactive state); leading to target ARC to inactive synapses. Interacts with PSEN1. Interacts with GRIN2A and GRIN2B; inhibiting homooligomerization. Palmitoylation anchors the protein into the membrane by allowing direct insertion into the hydrophobic core of the lipid bilayer. In terms of processing, ubiquitinated by UBE3A, leading to its degradation by the proteasome, thereby promoting AMPA receptors (AMPARs) expression at synapses. Ubiquitinated by RNF216 at Lys-268 and Lys-269 limiting ARC protein levels induced by synaptic activity and thus regulating ARC-dependent forms of synaptic plasticity. Post-translationally, phosphorylation at Ser-260 by CaMK2 prevents homooligomerization into virion-like capsids by disrupting an interaction surface essential for high-order oligomerization. Phosphorylation by CaMK2 inhibits synaptic activity. As to expression, expressed exclusively in certain parts of the brain including cortex and molecular layer of the hippocampus. Typically expressed at high level in a minority of neurons. Basal expression higher in cortex than in hippocampus, highest in visual cortex.

It localises to the extracellular vesicle membrane. The protein resides in the postsynaptic cell membrane. Its subcellular location is the synapse. It is found in the postsynaptic density. The protein localises to the early endosome membrane. It localises to the cell projection. The protein resides in the dendrite. Its subcellular location is the cytoplasm. It is found in the cytoskeleton. The protein localises to the cell cortex. It localises to the dendritic spine. The protein resides in the cytoplasmic vesicle. Its subcellular location is the secretory vesicle. It is found in the acrosome. The protein localises to the clathrin-coated vesicle membrane. Master regulator of synaptic plasticity that self-assembles into virion-like capsids that encapsulate RNAs and mediate intercellular RNA transfer in the nervous system. ARC protein is released from neurons in extracellular vesicles that mediate the transfer of ARC mRNA into new target cells, where ARC mRNA can undergo activity-dependent translation. ARC capsids are endocytosed and are able to transfer ARC mRNA into the cytoplasm of neurons. Acts as a key regulator of synaptic plasticity: required for protein synthesis-dependent forms of long-term potentiation (LTP) and depression (LTD) and for the formation of long-term memory. Regulates synaptic plasticity by promoting endocytosis of AMPA receptors (AMPARs) in response to synaptic activity: this endocytic pathway maintains levels of surface AMPARs in response to chronic changes in neuronal activity through synaptic scaling, thereby contributing to neuronal homeostasis. Acts as a postsynaptic mediator of activity-dependent synapse elimination in the developing cerebellum by mediating elimination of surplus climbing fiber synapses. Accumulates at weaker synapses, probably to prevent their undesired enhancement. This suggests that ARC-containing virion-like capsids may be required to eliminate synaptic material. Required to transduce experience into long-lasting changes in visual cortex plasticity and for long-term memory. Involved in postsynaptic trafficking and processing of amyloid-beta A4 (APP) via interaction with PSEN1. In addition to its role in synapses, also involved in the regulation of the immune system: specifically expressed in skin-migratory dendritic cells and regulates fast dendritic cell migration, thereby regulating T-cell activation. This chain is Activity-regulated cytoskeleton-associated protein, found in Rattus norvegicus (Rat).